A 301-amino-acid chain; its full sequence is MEINGVYIEDTFAEAFPIWVSRVLITAATKKWAKIAATEATGFGCSVIMCPAEAGIEKYVPPSKTPDGRPGFIIQICHPKKSELEHQMLERLGQCVLTCPTTAIFDAMGDMADEQLKVGFKLKFFGDGYEKKDELYGRKVYKIPIMGGEFITEAKFGIKKGVAGGNFFIMADTNASALIAAEAAVNAIASVDGVITPFPGGVVASGSKVGASNPKYKFMVATTNHKMCPTLKGVVEDSEIPEDVNGVYEIVIDGVDEESVKEAMKQGILAATRVKGVKKITAGNYGGKLGKYQFNLRELFE.

This sequence belongs to the FTR family. In terms of assembly, homotetramer.

It is found in the cytoplasm. The catalysed reaction is N-formylmethanofuran + 5,6,7,8-tetrahydromethanopterin + H(+) = N(5)-formyl-5,6,7,8-tetrahydromethanopterin + methanofuran. It participates in one-carbon metabolism; methanogenesis from CO(2); 5,10-methenyl-5,6,7,8-tetrahydromethanopterin from CO(2): step 2/3. Catalyzes the reversible transfer of a formyl group from formylmethanofuran (formyl-MFR) to tetrahydromethanopterin (H(4)MPT) to produce 5-formyl tetrahydromethanopterin (5-formyl-H(4)MPT) and methanofuran (MFR). This is Formylmethanofuran--tetrahydromethanopterin formyltransferase from Methanocaldococcus jannaschii (strain ATCC 43067 / DSM 2661 / JAL-1 / JCM 10045 / NBRC 100440) (Methanococcus jannaschii).